A 313-amino-acid polypeptide reads, in one-letter code: Methionyl-tRNA formyltransferase (313 aa).

110 to 113 (SLLP) contacts (6S)-5,6,7,8-tetrahydrofolate.

This sequence belongs to the Fmt family.

It catalyses the reaction L-methionyl-tRNA(fMet) + (6R)-10-formyltetrahydrofolate = N-formyl-L-methionyl-tRNA(fMet) + (6S)-5,6,7,8-tetrahydrofolate + H(+). Functionally, attaches a formyl group to the free amino group of methionyl-tRNA(fMet). The formyl group appears to play a dual role in the initiator identity of N-formylmethionyl-tRNA by promoting its recognition by IF2 and preventing the misappropriation of this tRNA by the elongation apparatus. This Lysinibacillus sphaericus (strain C3-41) protein is Methionyl-tRNA formyltransferase.